Consider the following 690-residue polypeptide: Adhesion G protein-coupled receptor L4 (690 aa).

The first 19 residues, 1–19 (MKRLPLLVVFSTLLNCSYT), serve as a signal peptide directing secretion. The EGF-like 1 domain maps to 20–57 (QNCTKTPCLPNAKCEIRNGIEACYCNMGFSGNGVTICE). At 20–432 (QNCTKTPCLP…DYNILTRITQ (413 aa)) the chain is on the extracellular side. Asn21 carries an N-linked (GlcNAc...) asparagine glycan. 6 disulfide bridges follow: Cys22–Cys33, Cys27–Cys42, Cys44–Cys56, Cys62–Cys75, Cys69–Cys84, and Cys86–Cys107. In terms of domain architecture, EGF-like 2; calcium-binding spans 58–108 (DDNECGNLTQSCGENANCTNTEGSYYCMCVPGFRSSSNQDRFITNDGTVCI). Residues Asn64 and Asn74 are each glycosylated (N-linked (GlcNAc...) asparagine). 6 N-linked (GlcNAc...) asparagine glycosylation sites follow: Asn127, Asn177, Asn188, Asn249, Asn381, and Asn395. The region spanning 244–419 (TEFDTNSTDI…AILMSSGPSI (176 aa)) is the GAIN-B domain. 2 disulfide bridges follow: Cys370–Cys401 and Cys389–Cys403. The interval 370–419 (CAFWNYSPDTMNGSWSSEGCELTYSNETHTSCRCNHLTHFAILMSSGPSI) is GPS. A helical transmembrane segment spans residues 433-453 (LGIIISLICLAICIFTFWFFS). Residues 454 to 460 (EIQSTRT) lie on the Cytoplasmic side of the membrane. The helical transmembrane segment at 461-481 (TIHKNLCCSLFLAELVFLVGI) threads the bilayer. Over 482–499 (NTNTNKLFCSIIAGLLHY) the chain is Extracellular. Residues 500–520 (FFLAAFAWMCIEGIHLYLIVV) traverse the membrane as a helical segment. Residues 521 to 532 (GVIYNKGFLHKN) lie on the Cytoplasmic side of the membrane. Residues 533–553 (FYIFGYLSPAVVVGFSAALGY) traverse the membrane as a helical segment. Over 554 to 573 (RYYGTTKVCWLSTENNFIWS) the chain is Extracellular. Residues 574–594 (FIGPACLIILVNLLAFGVIIY) traverse the membrane as a helical segment. At 595 to 618 (KVFRHTAGLKPEVSCFENIRSCAR) the chain is on the cytoplasmic side. Residues 619–639 (GALALLFLLGTTWIFGVLHVV) form a helical membrane-spanning segment. Over 640 to 646 (HASVVTA) the chain is Extracellular. Residues 647-667 (YLFTVSNAFQGMFIFLFLCVL) traverse the membrane as a helical segment. The Cytoplasmic portion of the chain corresponds to 668–690 (SRKIQEEYYRLFKNVPCCFGCLR).

Belongs to the G-protein coupled receptor 2 family. Adhesion G-protein coupled receptor (ADGR) subfamily. Heterodimer of 2 chains generated by proteolytic processing; the large extracellular N-terminal fragment and the membrane-bound C-terminal fragment predominantly remain associated and non-covalently linked. In terms of processing, glycosylated. Proteolytically cleaved into 2 subunits, an extracellular alpha subunit and a seven-transmembrane subunit. As to expression, detected in the majority of epithelial cells in tumor and normal tissues. Expressed also in human umbilical vein endothelial cells.

Its subcellular location is the cell membrane. In terms of biological role, endothelial orphan receptor that acts as a key regulator of angiogenesis. The polypeptide is Adhesion G protein-coupled receptor L4 (Homo sapiens (Human)).